A 193-amino-acid chain; its full sequence is Large ribosomal subunit protein uL5 (193 aa).

Belongs to the universal ribosomal protein uL5 family. In terms of assembly, part of the 50S ribosomal subunit; part of the 5S rRNA/L5/L18/L25 subcomplex. Contacts the 5S rRNA and the P site tRNA. Forms a bridge to the 30S subunit in the 70S ribosome.

This is one of the proteins that bind and probably mediate the attachment of the 5S RNA into the large ribosomal subunit, where it forms part of the central protuberance. In the 70S ribosome it contacts protein S13 of the 30S subunit (bridge B1b), connecting the 2 subunits; this bridge is implicated in subunit movement. Contacts the P site tRNA; the 5S rRNA and some of its associated proteins might help stabilize positioning of ribosome-bound tRNAs. The sequence is that of Large ribosomal subunit protein uL5 from Rhizorhabdus wittichii (strain DSM 6014 / CCUG 31198 / JCM 15750 / NBRC 105917 / EY 4224 / RW1) (Sphingomonas wittichii).